A 260-amino-acid chain; its full sequence is tRNA pseudouridine synthase C (260 aa).

Aspartate 54 is a catalytic residue.

The protein belongs to the pseudouridine synthase RluA family.

The enzyme catalyses uridine(65) in tRNA = pseudouridine(65) in tRNA. Responsible for synthesis of pseudouridine from uracil-65 in transfer RNAs. This chain is tRNA pseudouridine synthase C (truC), found in Salmonella typhi.